A 399-amino-acid chain; its full sequence is Tyrosine--tRNA ligase 2 (399 aa).

The short motif at 41 to 50 (PTAPDLHLGH) is the 'HIGH' region element. Residues 225-229 (KMSKS) carry the 'KMSKS' region motif. Lysine 228 contacts ATP. In terms of domain architecture, S4 RNA-binding spans 336 to 398 (ILIANLLKEA…GKRKFANITV (63 aa)).

It belongs to the class-I aminoacyl-tRNA synthetase family. TyrS type 2 subfamily. In terms of assembly, homodimer.

The protein resides in the cytoplasm. It catalyses the reaction tRNA(Tyr) + L-tyrosine + ATP = L-tyrosyl-tRNA(Tyr) + AMP + diphosphate + H(+). In terms of biological role, catalyzes the attachment of tyrosine to tRNA(Tyr) in a two-step reaction: tyrosine is first activated by ATP to form Tyr-AMP and then transferred to the acceptor end of tRNA(Tyr). The polypeptide is Tyrosine--tRNA ligase 2 (Pseudoalteromonas translucida (strain TAC 125)).